The chain runs to 106 residues: SH3 domain-binding glutamic acid-rich-like protein 2 (106 aa).

An SH3-binding motif is present at residues 61–67 (QGNPLPP).

Belongs to the SH3BGR family.

It localises to the nucleus. The sequence is that of SH3 domain-binding glutamic acid-rich-like protein 2 (sh3bgrl2) from Xenopus tropicalis (Western clawed frog).